The primary structure comprises 30 residues: Cyclotide cter-H (30 aa).

Positions 1 to 30 (GLPCGESCVFIPCITTVVGCSCKNKVCYND) form a cross-link, cyclopeptide (Gly-Asp). 3 disulfide bridges follow: cysteine 4–cysteine 20, cysteine 8–cysteine 22, and cysteine 13–cysteine 27.

Post-translationally, contains 3 disulfide bonds. This is a cyclic peptide.

In terms of biological role, probably participates in a plant defense mechanism. The polypeptide is Cyclotide cter-H (Clitoria ternatea (Butterfly pea)).